The following is a 300-amino-acid chain: Cis-3-alkyl-4-alkyloxetan-2-one decarboxylase (300 aa).

Positions 33–282 (VVVMLHGNPS…DDANHYVLED (250 aa)) constitute an AB hydrolase-1 domain.

This sequence belongs to the AB hydrolase superfamily. In terms of assembly, homotetramer. Forms a complex with OleC and OleD.

It localises to the cytoplasm. The catalysed reaction is a cis-3-alkyl-4-alkyloxetan-2-one = a cis-alkene + CO2. Involved in olefin biosynthesis. Catalyzes the elimination of carbon dioxide from beta-lactones to form the final olefin product. This Xanthomonas campestris pv. campestris (strain ATCC 33913 / DSM 3586 / NCPPB 528 / LMG 568 / P 25) protein is Cis-3-alkyl-4-alkyloxetan-2-one decarboxylase.